The sequence spans 200 residues: Recombination protein RecR (200 aa).

Residues 57–72 form a C4-type zinc finger; the sequence is CRQCRTLTEEELCPQC. In terms of domain architecture, Toprim spans 80-175; it reads TLLCVVEGPM…ITSRIAHGVP (96 aa).

Belongs to the RecR family.

Functionally, may play a role in DNA repair. It seems to be involved in an RecBC-independent recombinational process of DNA repair. It may act with RecF and RecO. The chain is Recombination protein RecR from Pseudomonas fluorescens (strain SBW25).